The chain runs to 179 residues: Ubiquitin-conjugating enzyme E2 2 (179 aa).

The interval 1–28 (MSTPARRRLMRDFKRMQQDPPSGVSASP) is disordered. Positions 4–150 (PARRRLMRDF…VRETVENSWN (147 aa)) constitute a UBC core domain. Catalysis depends on C88, which acts as the Glycyl thioester intermediate. The segment at 145–179 (VENSWNDDDDEEEEEEDEDEAEDEDDDDDDNIDED) is disordered. Positions 149 to 179 (WNDDDDEEEEEEDEDEAEDEDDDDDDNIDED) are enriched in acidic residues. Residues 151-179 (DDDDEEEEEEDEDEAEDEDDDDDDNIDED) are acidic tail.

The protein belongs to the ubiquitin-conjugating enzyme family.

The protein localises to the cytoplasm. It is found in the nucleus. It catalyses the reaction S-ubiquitinyl-[E1 ubiquitin-activating enzyme]-L-cysteine + [E2 ubiquitin-conjugating enzyme]-L-cysteine = [E1 ubiquitin-activating enzyme]-L-cysteine + S-ubiquitinyl-[E2 ubiquitin-conjugating enzyme]-L-cysteine.. It functions in the pathway protein modification; protein ubiquitination. Catalyzes the covalent attachment of ubiquitin to other proteins. Plays a role in transcription regulation by catalyzing the monoubiquitination of histone H2B to form H2BK123ub1. H2BK123ub1 gives a specific tag for epigenetic transcriptional activation and is also a prerequisite for H3K4me and H3K79me formation. Also involved in postreplication repair of UV-damaged DNA, in N-end rule-dependent protein degradation and in sporulation. This is Ubiquitin-conjugating enzyme E2 2 (UBC2) from Candida albicans (strain SC5314 / ATCC MYA-2876) (Yeast).